The following is a 426-amino-acid chain: GATA type zinc finger protein asd-4 (426 aa).

Residues 16–40 (CQNCATSTTPLWRRDEMGQVLCNAC) form a GATA-type zinc finger. 2 disordered regions span residues 70–143 (RPDL…NPHI) and 159–178 (PGFGVPTASPGRAPSPMNGE). Residues 104–113 (PNNPAAAARR) show a composition bias toward low complexity. Over residues 128 to 138 (SPVSRTGTPNV) the composition is skewed to polar residues. The stretch at 182–292 (QTHEQLLAAN…QDNGRHKKIR (111 aa)) forms a coiled coil. Low complexity predominate over residues 306–318 (VEPQQPEQQQPAP). The disordered stretch occupies residues 306–426 (VEPQQPEQQQ…PVEEAPKAES (121 aa)). The span at 335–353 (APAPAPEAAPEQAPAPAPE) shows a compositional bias: pro residues. Residues 354 to 419 (PVQEQAQEPE…SEPPTTAPVE (66 aa)) are compositionally biased toward low complexity.

Homotetramer.

It is found in the nucleus. Functionally, transcriptional regulator that functions in sexual development; disruption of asd-4 gene results in agenesis of ascus and ascospore with macroscopically normal fruiting body formation. The GATA-type zinc finger domain binds to DNA sequences from its own promoter region. This chain is GATA type zinc finger protein asd-4 (asd-4), found in Neurospora crassa (strain ATCC 24698 / 74-OR23-1A / CBS 708.71 / DSM 1257 / FGSC 987).